The primary structure comprises 248 residues: Probable cyclic nucleotide phosphodiesterase CBUA0032 (248 aa).

Positions 13, 15, 52, 82, 152, 191, and 193 each coordinate Fe cation. AMP is bound by residues His-15, Asp-52, and 82-83 (NH). His-193 lines the AMP pocket.

Belongs to the cyclic nucleotide phosphodiesterase class-III family. Fe(2+) is required as a cofactor.

The chain is Probable cyclic nucleotide phosphodiesterase CBUA0032 from Coxiella burnetii (strain RSA 493 / Nine Mile phase I).